The chain runs to 563 residues: Beta-catenin-like protein 1 (563 aa).

Met-1 is subject to N-acetylmethionine. Residues 1-49 (MDVGELLSYQPNRGTKRPRDDEEEEQKMRRKQTGTRERGRYREEEMTVV) form a disordered region. A Nuclear localization signal motif is present at residues 16 to 33 (KRPRDDEEEEQKMRRKQT). A compositionally biased stretch (basic and acidic residues) spans 34–45 (GTRERGRYREEE). HEAT repeat units follow at residues 79–129 (ESSV…VVAT) and 134–176 (YHLL…TLHE). Lys-91 carries the post-translational modification N6-acetyllysine. The Nuclear export signal (NES) motif lies at 130 to 140 (MPDLYHLLVEL). ARM repeat units follow at residues 178–228 (EEGA…MAEF), 229–273 (RPEM…LQDN), 274–323 (DENR…CLML), 325–363 (SNRE…AMIG), and 364–417 (PEGT…LLRN). Ser-389 carries the phosphoserine modification. Residues 476–540 (DTEEEFYLRR…HIIKEYAENI (65 aa)) are a coiled coil. At Ser-545 the chain carries Phosphoserine.

Component of the PRP19-CDC5L splicing complex composed of a core complex comprising a homotetramer of PRPF19, CDC5L, PLRG1 and BCAS2, and at least three less stably associated proteins CTNNBL1, CWC15 and HSPA8. Interacts directly with CWC15 and CDC5L in the complex. Interacts with AICDA; the interaction is important for the antibody diversification activity of AICDA. Interacts with PRPF31 (via its NLS). Interacts (via its N-terminal NLS) with KPNA1 and KPNA2. Widely expressed with highest levels in skeletal muscle, placenta, heart, spleen, testis and thyroid.

The protein localises to the nucleus. It is found in the cytoplasm. Its function is as follows. Component of the PRP19-CDC5L complex that forms an integral part of the spliceosome and is required for activating pre-mRNA splicing. Participates in AID/AICDA-mediated somatic hypermutation (SHM) and class-switch recombination (CSR), 2 processes resulting in the production of high-affinity, mutated isotype-switched antibodies. The sequence is that of Beta-catenin-like protein 1 (CTNNBL1) from Homo sapiens (Human).